The primary structure comprises 127 residues: Small ribosomal subunit protein uS11 (127 aa).

It belongs to the universal ribosomal protein uS11 family. Part of the 30S ribosomal subunit.

Functionally, located on the platform of the 30S subunit. The chain is Small ribosomal subunit protein uS11 from Picrophilus torridus (strain ATCC 700027 / DSM 9790 / JCM 10055 / NBRC 100828 / KAW 2/3).